A 311-amino-acid chain; its full sequence is Probable manganese-dependent inorganic pyrophosphatase (311 aa).

His9, Asp13, Asp15, Asp77, His99, and Asp151 together coordinate Mn(2+).

The protein belongs to the PPase class C family. Mn(2+) serves as cofactor.

It is found in the cytoplasm. It carries out the reaction diphosphate + H2O = 2 phosphate + H(+). This is Probable manganese-dependent inorganic pyrophosphatase from Streptococcus pneumoniae (strain JJA).